The sequence spans 263 residues: MDVMNAFDSQAEDSPLTIGHSLRRRPLARKKLSEMVEEELEQMIRRHEFGEGEQLPSERELMAFFNVGRPSVREALAALKRKGLVQINNGERARVSRPSADTIISELSGMAKDFLTHPGGIAHFEQLRLFFESSLVRYAAEHATDEQIALLTKALEINSQSLDDNALFIRSDVEFHRVLAEIPGNPIFMAIHVALLDWLIAARPSVPDRELHEHNNVSYQQHIVIVDAIRQRDPDKADRALQTHLNSVSATWHAFGKKSQKTR.

In terms of domain architecture, HTH gntR-type spans 30–98 (KKLSEMVEEE…NGERARVSRP (69 aa)). Positions 58–77 (ERELMAFFNVGRPSVREALA) form a DNA-binding region, H-T-H motif.

This sequence belongs to the NanR family.

Transcriptional repressor that controls expression of the genes required for the catabolism of sialic acids. The polypeptide is HTH-type transcriptional repressor NanR (Salmonella arizonae (strain ATCC BAA-731 / CDC346-86 / RSK2980)).